Consider the following 43-residue polypeptide: SPbeta prophage-derived uncharacterized protein YopG (43 aa).

This Bacillus subtilis (strain 168) protein is SPbeta prophage-derived uncharacterized protein YopG (yopG).